The sequence spans 280 residues: 4-deoxy-L-threo-5-hexosulose-uronate ketol-isomerase (280 aa).

Zn(2+)-binding residues include histidine 198, histidine 200, glutamate 205, and histidine 247.

This sequence belongs to the KduI family. Zn(2+) is required as a cofactor.

It catalyses the reaction 5-dehydro-4-deoxy-D-glucuronate = 3-deoxy-D-glycero-2,5-hexodiulosonate. Its pathway is glycan metabolism; pectin degradation; 2-dehydro-3-deoxy-D-gluconate from pectin: step 4/5. Catalyzes the isomerization of 5-dehydro-4-deoxy-D-glucuronate to 3-deoxy-D-glycero-2,5-hexodiulosonate. This is 4-deoxy-L-threo-5-hexosulose-uronate ketol-isomerase from Lachnospira eligens (strain ATCC 27750 / DSM 3376 / VPI C15-48 / C15-B4) (Eubacterium eligens).